Consider the following 297-residue polypeptide: Cyclin-dependent kinase 1 (297 aa).

The Protein kinase domain occupies 4 to 287 (FEKIEKIGEG…AKDILEHPYF (284 aa)). Residues 10 to 18 (IGEGTYGVV) and K33 each bind ATP. At T14 the chain carries Phosphothreonine. Phosphotyrosine is present on Y15. D128 serves as the catalytic Proton acceptor. Y160 bears the Phosphotyrosine mark. Phosphothreonine; by CAK is present on T161.

This sequence belongs to the protein kinase superfamily. CMGC Ser/Thr protein kinase family. CDC2/CDKX subfamily. Forms a stable but non-covalent complex with a regulatory subunit and with a cyclin. Component of the Frs-CycA-Cdk1 complex composed of Cdk1, CycA and Z600.

It localises to the nucleus. The catalysed reaction is L-seryl-[protein] + ATP = O-phospho-L-seryl-[protein] + ADP + H(+). It carries out the reaction L-threonyl-[protein] + ATP = O-phospho-L-threonyl-[protein] + ADP + H(+). It catalyses the reaction [DNA-directed RNA polymerase] + ATP = phospho-[DNA-directed RNA polymerase] + ADP + H(+). With respect to regulation, phosphorylation at Thr-14 or Tyr-15 inactivates the enzyme, while phosphorylation at Thr-161 activates it. Its function is as follows. Plays a key role in the control of the eukaryotic cell cycle. Required for entry into S-phase and mitosis. In embryos, promotes the release of Rif1 from chromatin during mid-blastula transition. p34 is a component of the kinase complex that phosphorylates the repetitive C-terminus of RNA polymerase II. This is Cyclin-dependent kinase 1 from Drosophila melanogaster (Fruit fly).